Here is a 210-residue protein sequence, read N- to C-terminus: Riboflavin kinase (210 aa).

The H-T-H motif-like stretch occupies residues Met1–Ser81. Residues Ile82 to Leu210 form a riboflavin kinase region. A CDP-binding site is contributed by Gly91–Ala96. Residues Thr120 and Asn122 each coordinate Mg(2+). Residues Thr177 and Glu185 each contribute to the FMN site. Position 190-193 (Val190–Arg193) interacts with CDP.

It belongs to the archaeal riboflavin kinase family. The cofactor is Mg(2+).

It carries out the reaction riboflavin + CTP = CDP + FMN + H(+). Its pathway is cofactor biosynthesis; FMN biosynthesis; FMN from riboflavin (CTP route): step 1/1. Functionally, catalyzes the CTP-dependent phosphorylation of riboflavin (vitamin B2) to form flavin mononucleotide (FMN). This is Riboflavin kinase (ribK) from Pyrobaculum aerophilum (strain ATCC 51768 / DSM 7523 / JCM 9630 / CIP 104966 / NBRC 100827 / IM2).